A 274-amino-acid chain; its full sequence is NH(3)-dependent NAD(+) synthetase (274 aa).

46–53 is an ATP binding site; it reads GISGGQDS. A Mg(2+)-binding site is contributed by D52. R140 contacts deamido-NAD(+). T160 serves as a coordination point for ATP. E165 lines the Mg(2+) pocket. Deamido-NAD(+)-binding residues include K173 and D180. ATP is bound by residues K189 and T211. Position 260–261 (260–261) interacts with deamido-NAD(+); the sequence is HK.

Belongs to the NAD synthetase family. As to quaternary structure, homodimer.

It carries out the reaction deamido-NAD(+) + NH4(+) + ATP = AMP + diphosphate + NAD(+) + H(+). Its pathway is cofactor biosynthesis; NAD(+) biosynthesis; NAD(+) from deamido-NAD(+) (ammonia route): step 1/1. In terms of biological role, catalyzes the ATP-dependent amidation of deamido-NAD to form NAD. Uses ammonia as a nitrogen source. This Listeria welshimeri serovar 6b (strain ATCC 35897 / DSM 20650 / CCUG 15529 / CIP 8149 / NCTC 11857 / SLCC 5334 / V8) protein is NH(3)-dependent NAD(+) synthetase.